A 310-amino-acid chain; its full sequence is Quinolinate synthase 2 (310 aa).

Iminosuccinate contacts are provided by His-30 and Ser-47. Cys-92 lines the [4Fe-4S] cluster pocket. Iminosuccinate-binding positions include 118–120 (YVN) and Ser-135. Cys-177 contributes to the [4Fe-4S] cluster binding site. Residues 203–205 (HPE) and Thr-220 each bind iminosuccinate. Cys-265 is a [4Fe-4S] cluster binding site.

This sequence belongs to the quinolinate synthase family. Type 2 subfamily. The cofactor is [4Fe-4S] cluster.

It localises to the cytoplasm. It catalyses the reaction iminosuccinate + dihydroxyacetone phosphate = quinolinate + phosphate + 2 H2O + H(+). It participates in cofactor biosynthesis; NAD(+) biosynthesis; quinolinate from iminoaspartate: step 1/1. In terms of biological role, catalyzes the condensation of iminoaspartate with dihydroxyacetone phosphate to form quinolinate. In Methanosarcina acetivorans (strain ATCC 35395 / DSM 2834 / JCM 12185 / C2A), this protein is Quinolinate synthase 2.